Reading from the N-terminus, the 313-residue chain is Caffeic acid 3-O-methyltransferase (313 aa).

112–118 provides a ligand contact to substrate; sequence IDQDRVF. The segment at 144-162 is substrate binding; sequence AFDYPGTDPRFNKIFNRAM. Positions 190, 213, 233, 234, and 247 each coordinate S-adenosyl-L-methionine. Histidine 251 serves as the catalytic Proton acceptor.

The protein belongs to the class I-like SAM-binding methyltransferase superfamily. Cation-independent O-methyltransferase family. COMT subfamily. As to quaternary structure, homodimer.

The catalysed reaction is (E)-caffeate + S-adenosyl-L-methionine = (E)-ferulate + S-adenosyl-L-homocysteine + H(+). Its pathway is aromatic compound metabolism; phenylpropanoid biosynthesis. Functionally, catalyzes the conversion of caffeic acid to ferulic acid and of 5-hydroxyferulic acid to sinapic acid. The resulting products may subsequently be converted to the corresponding alcohols that are incorporated into lignins. The protein is Caffeic acid 3-O-methyltransferase (COMT1) of Eucalyptus globulus (Tasmanian blue gum).